A 690-amino-acid chain; its full sequence is Lipase 2 (690 aa).

The signal sequence occupies residues 1 to 37; it reads MLRGQEERKYSIRKYSIGVVSVLAATMFVVSSHEAQA. Positions 38–295 are excised as a propeptide; that stretch reads SEKTPTNAAV…ADAKKVRPLK (258 aa). The segment covering 53 to 71 has biased composition (polar residues); sequence NQPGEQGNAITSHQMQSGK. The tract at residues 53 to 266 is disordered; that stretch reads NQPGEQGNAI…KPTDKNTDNK (214 aa). Over residues 72–81 the composition is skewed to basic and acidic residues; that stretch reads QLDDMHKENG. 3 stretches are compositionally biased toward polar residues: residues 93–114, 124–171, and 185–206; these read LQLS…NDNQ, SKQS…QPSI, and PTST…AQDA. 2 stretches are compositionally biased toward basic and acidic residues: residues 225–237 and 257–266; these read IDAK…RQSE and KPTDKNTDNK. Ser412 (nucleophile) is an active-site residue. A Ca(2+)-binding site is contributed by Gly579. Asp603 functions as the Charge relay system in the catalytic mechanism. Ca(2+) is bound at residue Asp644. Residue His645 is the Charge relay system of the active site. Positions 647, 652, and 655 each coordinate Ca(2+).

The protein belongs to the AB hydrolase superfamily. Lipase family.

The protein localises to the secreted. It catalyses the reaction a triacylglycerol + H2O = a diacylglycerol + a fatty acid + H(+). This Staphylococcus aureus (strain MSSA476) protein is Lipase 2 (lip2).